The following is a 537-amino-acid chain: Cryptic loci regulator 2 (537 aa).

The disordered stretch occupies residues 96 to 116 (VSARHVRPNPKSSKDTLEKQP). The span at 107–116 (SSKDTLEKQP) shows a compositional bias: basic and acidic residues.

As to quaternary structure, interacts with clr3.

The protein localises to the nucleus. Its subcellular location is the chromosome. It localises to the centromere. The protein resides in the telomere. Functionally, required for deacetylation in the mating-type region and the centromere. Acts upstream of the histone deacetylases to promote transcriptional silencing. Required for proper positioning of nucleosomes at heterochromatic loci and for transcriptional gene silencing (TGS) function of the Snf2/Hdac-containing repressor complex (SHREC). The polypeptide is Cryptic loci regulator 2 (clr2) (Schizosaccharomyces pombe (strain 972 / ATCC 24843) (Fission yeast)).